The primary structure comprises 551 residues: Cytochrome bc1 complex cytochrome b subunit (551 aa).

The helical transmembrane segment at Phe-44–Leu-64 threads the bilayer. Heme is bound by residues His-113 and His-127. The next 3 helical transmembrane spans lie at Ala-117–Phe-137, Trp-145–Met-165, and Val-188–Ile-208. Positions 215 and 230 each coordinate heme. A run of 5 helical transmembrane segments spans residues Ile-216 to Phe-236, Ser-265 to Ile-285, Pro-334 to Leu-354, Ile-380 to Ile-400, and Ile-417 to Leu-437. The tract at residues Ala-532–His-551 is disordered.

This sequence belongs to the cytochrome b family. In terms of assembly, the cytochrome bc1 complex is composed of a cytochrome b (QcrB), the Rieske iron-sulfur protein (QcrA) and a diheme cytochrome c (QcrC) subunit. The cofactor is heme.

The protein resides in the cell membrane. It catalyses the reaction a quinol + 2 Fe(III)-[cytochrome c](out) = a quinone + 2 Fe(II)-[cytochrome c](out) + 2 H(+)(out). In terms of biological role, cytochrome b subunit of the cytochrome bc1 complex, an essential component of the respiratory electron transport chain required for ATP synthesis. The bc1 complex catalyzes the oxidation of ubiquinol and the reduction of cytochrome c in the respiratory chain. The bc1 complex operates through a Q-cycle mechanism that couples electron transfer to generation of the proton gradient that drives ATP synthesis. The cytochrome b subunit contains two ubiquinol reactive sites: the oxidation (QP) site and the reduction (QN) site. In Mycobacterium leprae (strain TN), this protein is Cytochrome bc1 complex cytochrome b subunit (qcrB).